We begin with the raw amino-acid sequence, 49 residues long: uncharacterized protein (49 aa).

A helical membrane pass occupies residues 17–39 (LLVFDTSLYIPPFMLSFIGYSLS).

It localises to the membrane. This is an uncharacterized protein from Saccharomyces cerevisiae (strain ATCC 204508 / S288c) (Baker's yeast).